Here is a 262-residue protein sequence, read N- to C-terminus: Small ribosomal subunit protein eS4 (262 aa).

Residues 42 to 104 (LPLLIFLRNR…TGEFFRLIYD (63 aa)) enclose the S4 RNA-binding domain.

Belongs to the eukaryotic ribosomal protein eS4 family.

The chain is Small ribosomal subunit protein eS4 (RpS4) from Lysiphlebus testaceipes (Greenbugs aphid parastoid).